A 247-amino-acid chain; its full sequence is DNA polymerase sliding clamp 1 (247 aa).

It belongs to the PCNA family. Heterotrimer. The subunits circularize to form a toroid; DNA passes through its center. Replication factor C (RFC) is required to load the toroid on the DNA.

In terms of biological role, sliding clamp subunit that acts as a moving platform for DNA processing. Responsible for tethering the catalytic subunit of DNA polymerase and other proteins to DNA during high-speed replication. This chain is DNA polymerase sliding clamp 1, found in Aeropyrum pernix (strain ATCC 700893 / DSM 11879 / JCM 9820 / NBRC 100138 / K1).